Reading from the N-terminus, the 457-residue chain is Adenylosuccinate synthetase (457 aa).

Residues 40–46 (GDEGKGK) and 70–72 (GHT) each bind GTP. The Proton acceptor role is filled by Asp-41. 2 residues coordinate Mg(2+): Asp-41 and Gly-70. Residues 41 to 44 (DEGK), 68 to 71 (NAGH), Thr-161, Arg-175, Asn-255, Thr-270, and Arg-334 each bind IMP. His-71 functions as the Proton donor in the catalytic mechanism. Position 330-336 (330-336 (VTTGRKR)) interacts with substrate. GTP is bound by residues Arg-336, 362–364 (KLD), and 444–446 (GVG).

The protein belongs to the adenylosuccinate synthetase family. Homodimer. Mg(2+) serves as cofactor.

It is found in the cytoplasm. It catalyses the reaction IMP + L-aspartate + GTP = N(6)-(1,2-dicarboxyethyl)-AMP + GDP + phosphate + 2 H(+). It functions in the pathway purine metabolism; AMP biosynthesis via de novo pathway; AMP from IMP: step 1/2. Functionally, plays an important role in the de novo pathway and in the salvage pathway of purine nucleotide biosynthesis. Catalyzes the first committed step in the biosynthesis of AMP from IMP. This Caenorhabditis elegans protein is Adenylosuccinate synthetase.